A 551-amino-acid polypeptide reads, in one-letter code: Sodium-dependent high-affinity dicarboxylate transporter 2 (551 aa).

Transmembrane regions (helical) follow at residues 9 to 29 (LIKKLLVLLGPLVAVPLLFFG), 34 to 54 (CLFSIIFLSTYWIGEAFPIGV), 82 to 102 (SIVLFMCTLIMAMAVEATGLH), 119 to 139 (VMLLGFMCITSFISFFVSDTA), 194 to 214 (FCKALILACAHASLIGGTAII), 243 to 263 (WMVFAIPPMFVYLLASYIILV), 347 to 367 (VSGVLISCILFVWPKDPFDPI), 417 to 437 (IFVGMSSLPLQLTVTTIIVIM), 449 to 469 (IFIPISLGVAESMGVHPLYLA), and 497 to 517 (VISMVEMIVCGFLLNIACILI).

It belongs to the SLC13A/DASS transporter (TC 2.A.47) family. NADC subfamily.

The protein resides in the membrane. High-affinity sodium-dicarboxylate cotransporter that accepts a range of tricarboxylic acid-cycle intermediates with 4-5 carbon atoms. There is no interaction with monocarboxylates. This Caenorhabditis elegans protein is Sodium-dependent high-affinity dicarboxylate transporter 2 (nac-2).